The following is a 240-amino-acid chain: Adenylate dimethylallyltransferase (240 aa).

This sequence belongs to the isopentenyl transferase family.

It catalyses the reaction dimethylallyl diphosphate + AMP = N(6)-(dimethylallyl)adenosine 5'-phosphate + diphosphate. Its function is as follows. Transfers dimethylallyl groups to AMP as part of the biosynthesis of cytokinin phytohormones. The sequence is that of Adenylate dimethylallyltransferase (izt) from Agrobacterium fabrum (strain C58 / ATCC 33970) (Agrobacterium tumefaciens (strain C58)).